The primary structure comprises 422 residues: Gamma-glutamyl phosphate reductase (422 aa).

It belongs to the gamma-glutamyl phosphate reductase family.

It localises to the cytoplasm. The enzyme catalyses L-glutamate 5-semialdehyde + phosphate + NADP(+) = L-glutamyl 5-phosphate + NADPH + H(+). It participates in amino-acid biosynthesis; L-proline biosynthesis; L-glutamate 5-semialdehyde from L-glutamate: step 2/2. Functionally, catalyzes the NADPH-dependent reduction of L-glutamate 5-phosphate into L-glutamate 5-semialdehyde and phosphate. The product spontaneously undergoes cyclization to form 1-pyrroline-5-carboxylate. This chain is Gamma-glutamyl phosphate reductase, found in Chlorobium phaeovibrioides (strain DSM 265 / 1930) (Prosthecochloris vibrioformis (strain DSM 265)).